The following is an 80-amino-acid chain: Cytochrome c oxidase subunit 7B, mitochondrial (80 aa).

A mitochondrion-targeting transit peptide spans 1 to 24 (MFPLAKNALSRLRVQSIQQAVARQ). Residues 25–32 (IHQKRAPD) lie on the Mitochondrial matrix side of the membrane. A helical membrane pass occupies residues 33–59 (FHDKYGNAVLASGATFCVAVWVYMATQ). Residues 60 to 80 (IGIEWNPSPVGRVTPKEWREQ) are Mitochondrial intermembrane-facing.

Belongs to the cytochrome c oxidase VIIb family. In terms of assembly, component of the cytochrome c oxidase (complex IV, CIV), a multisubunit enzyme composed of 14 subunits. The complex is composed of a catalytic core of 3 subunits MT-CO1, MT-CO2 and MT-CO3, encoded in the mitochondrial DNA, and 11 supernumerary subunits COX4I1 (or COX4I2), COX5A, COX5B, COX6A2 (or COX6A1), COX6B1 (or COX6B2), COX6C, COX7A1 (or COX7A2), COX7B, COX7C, COX8B and NDUFA4, which are encoded in the nuclear genome. The complex exists as a monomer or a dimer and forms supercomplexes (SCs) in the inner mitochondrial membrane with NADH-ubiquinone oxidoreductase (complex I, CI) and ubiquinol-cytochrome c oxidoreductase (cytochrome b-c1 complex, complex III, CIII), resulting in different assemblies (supercomplex SCI(1)III(2)IV(1) and megacomplex MCI(2)III(2)IV(2)).

It is found in the mitochondrion inner membrane. The protein operates within energy metabolism; oxidative phosphorylation. Its function is as follows. Component of the cytochrome c oxidase, the last enzyme in the mitochondrial electron transport chain which drives oxidative phosphorylation. The respiratory chain contains 3 multisubunit complexes succinate dehydrogenase (complex II, CII), ubiquinol-cytochrome c oxidoreductase (cytochrome b-c1 complex, complex III, CIII) and cytochrome c oxidase (complex IV, CIV), that cooperate to transfer electrons derived from NADH and succinate to molecular oxygen, creating an electrochemical gradient over the inner membrane that drives transmembrane transport and the ATP synthase. Cytochrome c oxidase is the component of the respiratory chain that catalyzes the reduction of oxygen to water. Electrons originating from reduced cytochrome c in the intermembrane space (IMS) are transferred via the dinuclear copper A center (CU(A)) of subunit 2 and heme A of subunit 1 to the active site in subunit 1, a binuclear center (BNC) formed by heme A3 and copper B (CU(B)). The BNC reduces molecular oxygen to 2 water molecules using 4 electrons from cytochrome c in the IMS and 4 protons from the mitochondrial matrix. Plays a role in proper central nervous system (CNS) development in vertebrates. The chain is Cytochrome c oxidase subunit 7B, mitochondrial (COX7B) from Bos taurus (Bovine).